A 426-amino-acid polypeptide reads, in one-letter code: Trigger factor 1 (426 aa).

Residues 163–248 (QDTVNIDFAG…VNKLKRKEYA (86 aa)) enclose the PPIase FKBP-type domain.

Belongs to the FKBP-type PPIase family. Tig subfamily.

It is found in the cytoplasm. The catalysed reaction is [protein]-peptidylproline (omega=180) = [protein]-peptidylproline (omega=0). In terms of biological role, involved in protein export. Acts as a chaperone by maintaining the newly synthesized protein in an open conformation. Functions as a peptidyl-prolyl cis-trans isomerase. The protein is Trigger factor 1 of Desulfitobacterium hafniense (strain Y51).